The chain runs to 460 residues: tRNA modification GTPase MnmE (460 aa).

(6S)-5-formyl-5,6,7,8-tetrahydrofolate contacts are provided by Arg29, Glu86, and Lys126. In terms of domain architecture, TrmE-type G spans 222–383; sequence GMRVVIAGRP…LAEHLKECMG (162 aa). Position 232 (Asn232) interacts with K(+). Residues 232-237, 251-257, 276-279, and 341-344 each bind GTP; these read NAGKSS, TAIAGTT, DTAG, and NKAD. Ser236 is a binding site for Mg(2+). K(+) contacts are provided by Thr251, Ile253, and Thr256. Thr257 provides a ligand contact to Mg(2+). Residue Lys460 coordinates (6S)-5-formyl-5,6,7,8-tetrahydrofolate.

Belongs to the TRAFAC class TrmE-Era-EngA-EngB-Septin-like GTPase superfamily. TrmE GTPase family. In terms of assembly, homodimer. Heterotetramer of two MnmE and two MnmG subunits. The cofactor is K(+).

It is found in the cytoplasm. Functionally, exhibits a very high intrinsic GTPase hydrolysis rate. Involved in the addition of a carboxymethylaminomethyl (cmnm) group at the wobble position (U34) of certain tRNAs, forming tRNA-cmnm(5)s(2)U34. The sequence is that of tRNA modification GTPase MnmE from Pseudoalteromonas atlantica (strain T6c / ATCC BAA-1087).